Reading from the N-terminus, the 372-residue chain is Fatty acid 2-hydroxylase (372 aa).

One can recognise a Cytochrome b5 heme-binding domain in the interval 8 to 86; sequence AASFTPAEVQ…LEQYYVGELR (79 aa). His-43 and His-69 together coordinate heme. A run of 2 helical transmembrane segments spans residues 168–188 and 213–233; these read VWYSVPIIWVPLVLYLSWSYY and SVFIGLFVLGMLFWTFVEYVI. The region spanning 219–361 is the Fatty acid hydroxylase domain; that stretch reads FVLGMLFWTF…TKLWDYFFHT (143 aa). Zn(2+) contacts are provided by His-234, His-239, His-257, His-260, and His-261. A run of 2 helical transmembrane segments spans residues 268–288 and 290–310; these read SRLVFPPVPASLVIAFFYVFL and LILPETVGGIIFAGGLLGYVL. His-315, His-319, His-336, His-339, and His-340 together coordinate Zn(2+).

The protein belongs to the sterol desaturase family. SCS7 subfamily. Requires Zn(2+) as cofactor. In terms of tissue distribution, expressed in brain (at protein level). Detected in cerebellum and forebrain. Expression in the white matter is mainly restricted in oligodendrocytes. Expressed in stomach, kidney, skin and testis. Expressed in sebaceous gland.

Its subcellular location is the endoplasmic reticulum membrane. The protein localises to the microsome membrane. It catalyses the reaction a 1,2-saturated fatty acid + 2 Fe(II)-[cytochrome b5] + O2 + 2 H(+) = a (R)-2-hydroxy fatty acid + 2 Fe(III)-[cytochrome b5] + H2O. The catalysed reaction is hexadecanoate + 2 Fe(II)-[cytochrome b5] + O2 + 2 H(+) = (R)-2-hydroxyhexadecanoate + 2 Fe(III)-[cytochrome b5] + H2O. It carries out the reaction octadecanoate + 2 Fe(II)-[cytochrome b5] + O2 + 2 H(+) = (R)-2-hydroxyoctadecanoate + 2 Fe(III)-[cytochrome b5] + H2O. The enzyme catalyses docosanoate + 2 Fe(II)-[cytochrome b5] + O2 + 2 H(+) = 2-hydroxydocosanoate + 2 Fe(III)-[cytochrome b5] + H2O. It catalyses the reaction tetracosanoate + 2 Fe(II)-[cytochrome b5] + O2 + 2 H(+) = (R)-2-hydroxytetracosanoate + 2 Fe(III)-[cytochrome b5] + H2O. It participates in sphingolipid metabolism; galactosylceramide biosynthesis. It functions in the pathway lipid metabolism; fatty acid metabolism. Its function is as follows. Catalyzes the hydroxylation of free fatty acids at the C-2 position to produce 2-hydroxy fatty acids, which are building blocks of sphingolipids and glycosphingolipids common in neural tissue and epidermis. FA2H is stereospecific for the production of (R)-2-hydroxy fatty acids. Plays an essential role in the synthesis of galactosphingolipids of the myelin sheath. Responsible for the synthesis of sphingolipids and glycosphingolipids involved in the formation of epidermal lamellar bodies critical for skin permeability barrier. Participates in the synthesis of glycosphingolipids and a fraction of type II wax diesters in sebaceous gland, specifically regulating hair follicle homeostasis. Involved in the synthesis of sphingolipids of plasma membrane rafts, controlling lipid raft mobility and trafficking of raft-associated proteins. This Mus musculus (Mouse) protein is Fatty acid 2-hydroxylase.